The sequence spans 172 residues: uncharacterized protein (172 aa).

The 161-residue stretch at 12-172 (IRLRCMEDRD…IAVYERKSYN (161 aa)) folds into the N-acetyltransferase domain.

This is an uncharacterized protein from Bacillus subtilis (strain 168).